Reading from the N-terminus, the 469-residue chain is MAKTLYEKLFDAHVVYEAAGETPILYINRHLIHEVTSPQAFDGLRVAGRQVRQIGKTFGTMDHSISTQVRDVNKLEGQAKIQVLELAKNCEASGISLFDMQTKEQGIVHVMGPEQGLTLPGMTIVCGDSHTATHGAFGALAFGIGTSEVEHVLATQTLKQARAKSMKVEVRGKVNPGITAKDIVLAIIGKTTMAGGTGHVVEFYGEAIRDLSMEGRMTVCNMAIEFGAKAGLVAPDETTFAYLKDRPHAPKGKDWDDAVEYWKTLKSDDDAVFDSVVVLEAKDIAPQVTWGTNPGQVIGIDQVVPNPQEMADPVTKASAEKALAYIGLDANTDMKNIPVDQVFIGSCTNSRIEDLRAAAAVMKGRKKADNVKRVLVVPGSGLVKEQAEKEGLDKIFIEAGAEWRNPGCSMCLGMNDDRLGEWERCASTSNRNFEGRQGRNGRTHLVSPAMAAAAAMFGKFVDIRHVELN.

[4Fe-4S] cluster-binding residues include Cys347, Cys408, and Cys411.

Belongs to the aconitase/IPM isomerase family. LeuC type 1 subfamily. Heterodimer of LeuC and LeuD. Requires [4Fe-4S] cluster as cofactor.

It carries out the reaction (2R,3S)-3-isopropylmalate = (2S)-2-isopropylmalate. It functions in the pathway amino-acid biosynthesis; L-leucine biosynthesis; L-leucine from 3-methyl-2-oxobutanoate: step 2/4. Catalyzes the isomerization between 2-isopropylmalate and 3-isopropylmalate, via the formation of 2-isopropylmaleate. This Actinobacillus pleuropneumoniae serotype 3 (strain JL03) protein is 3-isopropylmalate dehydratase large subunit.